Reading from the N-terminus, the 77-residue chain is Epoxide hydrolase (77 aa).

Monomer.

It catalyses the reaction an epoxide + H2O = an ethanediol. In terms of biological role, this enzyme acts on aliphatic epoxides. Its substrates include epichlorohydrin, epibromohydrin, epoxyoctane and styrene epoxide. In Pseudomonas sp. (strain AD1), this protein is Epoxide hydrolase.